The sequence spans 1269 residues: Rho GTPase-activating protein 29 (1269 aa).

A phosphoserine mark is found at Ser-171, Ser-176, Ser-179, and Ser-190. One can recognise an F-BAR domain in the interval 192 to 462 (IELDSMLLKN…SAKLYDPGQE (271 aa)). Positions 296-418 (RKNEMEKQRK…EILTQLRKLV (123 aa)) form a coiled coil. Disordered regions lie at residues 472–523 (SAEE…NSAD) and 540–599 (DSES…NSLG). Phosphoserine occurs at positions 499, 519, and 552. A compositionally biased stretch (low complexity) spans 540–559 (DSESTGGSSESRSLDSESIS). The Phorbol-ester/DAG-type zinc finger occupies 612 to 657 (THKFRKLRSPTKCRDCEGIVVFHGVECEECLLVCHRKCLENLVIIC). The region spanning 671 to 886 (AEFTQVAKKE…FLITYSQKIF (216 aa)) is the Rho-GAP domain. The tract at residues 909–936 (PGYLPKSLLSPEERDPERSMKSLFFSSK) is disordered. Ser-918 bears the Phosphoserine mark. The segment covering 919–928 (PEERDPERSM) has biased composition (basic and acidic residues). Phosphoserine occurs at positions 954 and 1026. Residues 1120–1269 (RSSGDHPVSI…DLEDEIPQFV (150 aa)) form a disordered region. A compositionally biased stretch (polar residues) spans 1128–1145 (SITQPSKPYTEPVRSTRQ). A phosphoserine mark is found at Ser-1152 and Ser-1154. Positions 1162 to 1172 (TPRTLQPQHWT) are enriched in polar residues. Over residues 1229–1241 (SRPEEKAEERDQP) the composition is skewed to basic and acidic residues. Over residues 1259–1269 (EDLEDEIPQFV) the composition is skewed to acidic residues. An interaction with PTPN13/PTPL1 region spans residues 1266 to 1269 (PQFV).

In terms of assembly, interacts with PTPN13/PTPL1. Interacts with RAP2A via its coiled coil domain. Interacts with RASIP1.

GTPase activator for the Rho-type GTPases by converting them to an inactive GDP-bound state. Has strong activity toward RHOA, and weaker activity toward RAC1 and CDC42. May act as a specific effector of RAP2A to regulate Rho. In concert with RASIP1, suppresses RhoA signaling and dampens ROCK and MYH9 activities in endothelial cells and plays an essential role in blood vessel tubulogenesis. The protein is Rho GTPase-activating protein 29 (ARHGAP29) of Bos taurus (Bovine).